Here is a 118-residue protein sequence, read N- to C-terminus: Large ribosomal subunit protein bL17 (118 aa).

Belongs to the bacterial ribosomal protein bL17 family. Part of the 50S ribosomal subunit. Contacts protein L32.

This chain is Large ribosomal subunit protein bL17, found in Thermus thermophilus (strain ATCC BAA-163 / DSM 7039 / HB27).